A 352-amino-acid chain; its full sequence is PDZ and LIM domain protein 2 (352 aa).

One can recognise a PDZ domain in the interval 1–84 (MALTVDVAGP…PLRLQLDRSQ (84 aa)). Disordered regions lie at residues 69 to 95 (IRQSPSPLRLQLDRSQAASPGQTNGDS) and 108 to 141 (VRTHTESHSSLRSSYSSPTSLSPRAGSPFSPPPF). Residues 81 to 95 (DRSQAASPGQTNGDS) are compositionally biased toward polar residues. Over residues 117 to 135 (SLRSSYSSPTSLSPRAGSP) the composition is skewed to low complexity. The residue at position 124 (Ser-124) is a Phosphoserine. Thr-126 bears the Phosphothreonine mark. Ser-127, Ser-129, Ser-134, Ser-137, Ser-143, Ser-161, Ser-197, Ser-203, Ser-213, and Ser-266 each carry phosphoserine. 2 disordered regions span residues 170–214 (LSYS…GGSL) and 253–275 (ERGGTPAFLPSSLSPQSSLPASR). Positions 258-275 (PAFLPSSLSPQSSLPASR) are enriched in low complexity. Positions 284-344 (HTCEKCSTSI…EKHARQRYSA (61 aa)) constitute an LIM zinc-binding domain.

Interacts with alpha-actinins ACTN1 and ACTN4, FLNA and MYH9. Interacts (via LIM zinc-binding domain) with MKRN2.

Its subcellular location is the cytoplasm. The protein localises to the cytoskeleton. Its function is as follows. Probable adapter protein located at the actin cytoskeleton that promotes cell attachment. Necessary for the migratory capacity of epithelial cells. Overexpression enhances cell adhesion to collagen and fibronectin and suppresses anchorage independent growth. May contribute to tumor cell migratory capacity. The sequence is that of PDZ and LIM domain protein 2 (PDLIM2) from Macaca fascicularis (Crab-eating macaque).